Reading from the N-terminus, the 163-residue chain is NADH-quinone oxidoreductase subunit I (163 aa).

2 4Fe-4S ferredoxin-type domains span residues 53–83 (LRRY…IEAG) and 94–123 (TLYD…LTPE). Residues cysteine 63, cysteine 66, cysteine 69, cysteine 73, cysteine 103, cysteine 106, cysteine 109, and cysteine 113 each coordinate [4Fe-4S] cluster.

It belongs to the complex I 23 kDa subunit family. In terms of assembly, NDH-1 is composed of 14 different subunits. Subunits NuoA, H, J, K, L, M, N constitute the membrane sector of the complex. The cofactor is [4Fe-4S] cluster.

Its subcellular location is the cell inner membrane. The catalysed reaction is a quinone + NADH + 5 H(+)(in) = a quinol + NAD(+) + 4 H(+)(out). NDH-1 shuttles electrons from NADH, via FMN and iron-sulfur (Fe-S) centers, to quinones in the respiratory chain. The immediate electron acceptor for the enzyme in this species is believed to be ubiquinone. Couples the redox reaction to proton translocation (for every two electrons transferred, four hydrogen ions are translocated across the cytoplasmic membrane), and thus conserves the redox energy in a proton gradient. This chain is NADH-quinone oxidoreductase subunit I, found in Coxiella burnetii (strain Dugway 5J108-111).